Here is a 142-residue protein sequence, read N- to C-terminus: Neurofilament heavy polypeptide (142 aa).

The IF rod domain occupies 1-142 (MRGAVLRLGA…EAAKVNTDAM (142 aa)). Residues 26–74 (IAHVRQRLDDEARQRQEAEAAARALARFAQEAEAARVELQKKAQALQEE) adopt a coiled-coil conformation.

Belongs to the intermediate filament family. As to quaternary structure, forms heterodimers with NEFL; which can further hetero-oligomerize (in vitro). Forms heterodimers with INA (in vitro). There are a number of repeats of the tripeptide K-S-P, NFH is phosphorylated on a number of the serines in this motif. It is thought that phosphorylation of NFH results in the formation of interfilament cross bridges that are important in the maintenance of axonal caliber. In terms of processing, phosphorylation seems to play a major role in the functioning of the larger neurofilament polypeptides (NF-M and NF-H), the levels of phosphorylation being altered developmentally and coincidentally with a change in the neurofilament function. Post-translationally, phosphorylated in the head and rod regions by the PKC kinase PKN1, leading to the inhibition of polymerization.

It localises to the cytoplasm. Its subcellular location is the cytoskeleton. The protein resides in the cell projection. It is found in the axon. Neurofilaments usually contain three intermediate filament proteins: NEFL, NEFM, and NEFH which are involved in the maintenance of neuronal caliber. NEFH has an important function in mature axons that is not subserved by the two smaller NF proteins. May additionally cooperate with the neuronal intermediate filament proteins PRPH and INA to form neuronal filamentous networks. This Sus scrofa (Pig) protein is Neurofilament heavy polypeptide (NEFH).